We begin with the raw amino-acid sequence, 348 residues long: NADH-ubiquinone oxidoreductase chain 2 (348 aa).

The next 10 membrane-spanning stretches (helical) occupy residues 3–23 (PTVL…TFIG), 25–45 (HWLL…PLMI), 59–79 (YFIT…TNAW), 95–115 (ATLA…HFWL), 149–171 (LNSN…GGLN), 178–198 (ILAY…HYSP), 199–219 (SLTL…FLLF), 242–262 (VIAL…GFMP), 274–294 (SLII…FFYL), and 324–344 (LILL…PLIL).

It belongs to the complex I subunit 2 family.

The protein localises to the mitochondrion inner membrane. It catalyses the reaction a ubiquinone + NADH + 5 H(+)(in) = a ubiquinol + NAD(+) + 4 H(+)(out). Its function is as follows. Core subunit of the mitochondrial membrane respiratory chain NADH dehydrogenase (Complex I) that is believed to belong to the minimal assembly required for catalysis. Complex I functions in the transfer of electrons from NADH to the respiratory chain. The immediate electron acceptor for the enzyme is believed to be ubiquinone. The polypeptide is NADH-ubiquinone oxidoreductase chain 2 (MT-ND2) (Scyliorhinus canicula (Small-spotted catshark)).